The primary structure comprises 546 residues: Cryptochrome DASH, chloroplastic/mitochondrial (546 aa).

Residues 4 to 151 (TRVVIWFRND…TMERHWGSTL (148 aa)) enclose the Photolyase/cryptochrome alpha/beta domain. Residues 497–546 (PRRDFTEMGSPPGPRRGGGGGGRGRGRPGGSTPNRGTKARVASVYDTVYG) are disordered. Residues 511–525 (RRGGGGGGRGRGRPG) are compositionally biased toward gly residues.

It belongs to the DNA photolyase class-1 family. FAD serves as cofactor. Requires (6R)-5,10-methylene-5,6,7,8-tetrahydrofolate as cofactor.

Its subcellular location is the plastid. The protein localises to the chloroplast. It localises to the mitochondrion. In terms of biological role, may have a photoreceptor function. Binds ss- and ds-DNA in a sequence non-specific manner, lacks photolyase activity. This is Cryptochrome DASH, chloroplastic/mitochondrial from Ostreococcus tauri.